We begin with the raw amino-acid sequence, 1235 residues long: Ubiquitin carboxyl-terminal hydrolase 40 (1235 aa).

The USP domain maps to 41–482; sequence SGIRNQGGTC…SAYMLFYRKA (442 aa). The active-site Nucleophile is Cys-50. His-305 (proton acceptor) is an active-site residue.

This sequence belongs to the peptidase C19 family.

It carries out the reaction Thiol-dependent hydrolysis of ester, thioester, amide, peptide and isopeptide bonds formed by the C-terminal Gly of ubiquitin (a 76-residue protein attached to proteins as an intracellular targeting signal).. In Mus musculus (Mouse), this protein is Ubiquitin carboxyl-terminal hydrolase 40 (Usp40).